We begin with the raw amino-acid sequence, 280 residues long: Putative pyruvate, phosphate dikinase regulatory protein (280 aa).

An ADP-binding site is contributed by 154-161 (GVSRTSKT).

Belongs to the pyruvate, phosphate/water dikinase regulatory protein family. PDRP subfamily.

It catalyses the reaction N(tele)-phospho-L-histidyl/L-threonyl-[pyruvate, phosphate dikinase] + ADP = N(tele)-phospho-L-histidyl/O-phospho-L-threonyl-[pyruvate, phosphate dikinase] + AMP + H(+). The catalysed reaction is N(tele)-phospho-L-histidyl/O-phospho-L-threonyl-[pyruvate, phosphate dikinase] + phosphate + H(+) = N(tele)-phospho-L-histidyl/L-threonyl-[pyruvate, phosphate dikinase] + diphosphate. In terms of biological role, bifunctional serine/threonine kinase and phosphorylase involved in the regulation of the pyruvate, phosphate dikinase (PPDK) by catalyzing its phosphorylation/dephosphorylation. The protein is Putative pyruvate, phosphate dikinase regulatory protein of Nitrobacter hamburgensis (strain DSM 10229 / NCIMB 13809 / X14).